An 89-amino-acid chain; its full sequence is Small ribosomal subunit protein uS14 (89 aa).

The protein belongs to the universal ribosomal protein uS14 family. Part of the 30S ribosomal subunit. Contacts proteins S3 and S10.

In terms of biological role, binds 16S rRNA, required for the assembly of 30S particles and may also be responsible for determining the conformation of the 16S rRNA at the A site. This is Small ribosomal subunit protein uS14 from Chlorobium limicola (strain DSM 245 / NBRC 103803 / 6330).